Consider the following 558-residue polypeptide: uncharacterized protein (558 aa).

The interval 396 to 420 (SSITDNDTDNDSGATESQQTDSEND) is disordered. Residues 407–416 (SGATESQQTD) show a composition bias toward polar residues.

Belongs to the chlamydial CPn_0065/CT_288/TC_0561 family.

This is an uncharacterized protein from Chlamydia muridarum (strain MoPn / Nigg).